Here is a 425-residue protein sequence, read N- to C-terminus: Serine--tRNA ligase (425 aa).

230 to 232 contributes to the L-serine binding site; that stretch reads TAE. 261-263 contributes to the ATP binding site; sequence RSE. L-serine is bound at residue Glu-284. ATP is bound at residue 348–351; it reads EISS. Ser-384 provides a ligand contact to L-serine.

This sequence belongs to the class-II aminoacyl-tRNA synthetase family. Type-1 seryl-tRNA synthetase subfamily. As to quaternary structure, homodimer. The tRNA molecule binds across the dimer.

It localises to the cytoplasm. The enzyme catalyses tRNA(Ser) + L-serine + ATP = L-seryl-tRNA(Ser) + AMP + diphosphate + H(+). The catalysed reaction is tRNA(Sec) + L-serine + ATP = L-seryl-tRNA(Sec) + AMP + diphosphate + H(+). It functions in the pathway aminoacyl-tRNA biosynthesis; selenocysteinyl-tRNA(Sec) biosynthesis; L-seryl-tRNA(Sec) from L-serine and tRNA(Sec): step 1/1. Its function is as follows. Catalyzes the attachment of serine to tRNA(Ser). Is also able to aminoacylate tRNA(Sec) with serine, to form the misacylated tRNA L-seryl-tRNA(Sec), which will be further converted into selenocysteinyl-tRNA(Sec). This chain is Serine--tRNA ligase, found in Streptococcus pyogenes serotype M2 (strain MGAS10270).